The chain runs to 179 residues: MFDLGFWEVLIIMLIGLLILGPERMARAVRMAGLYMGKARAAFNAAKSEVERELQVEEMRKATESVRKDVDKVRKDVEKNARRFEAEADGVGKTFRDVGRQADDAAKGAASGAGGDDARSAGAGDPSGLTDQRGSDQPPAGGGRTAAGERGEPAEAAPAQQSEDTARKGQGGGGEEKRQ.

The chain crosses the membrane as a helical span at residues 1-21 (MFDLGFWEVLIIMLIGLLILG). 2 stretches are compositionally biased toward basic and acidic residues: residues 75-86 (KDVEKNARRFEA) and 94-106 (TFRD…DDAA). The interval 75–179 (KDVEKNARRF…QGGGGEEKRQ (105 aa)) is disordered.

This sequence belongs to the TatB family. The Tat system comprises two distinct complexes: a TatABC complex, containing multiple copies of TatA, TatB and TatC subunits, and a separate TatA complex, containing only TatA subunits. Substrates initially bind to the TatABC complex, which probably triggers association of the separate TatA complex to form the active translocon.

Its subcellular location is the cell inner membrane. Part of the twin-arginine translocation (Tat) system that transports large folded proteins containing a characteristic twin-arginine motif in their signal peptide across membranes. Together with TatC, TatB is part of a receptor directly interacting with Tat signal peptides. TatB may form an oligomeric binding site that transiently accommodates folded Tat precursor proteins before their translocation. This is Sec-independent protein translocase protein TatB from Alkalilimnicola ehrlichii (strain ATCC BAA-1101 / DSM 17681 / MLHE-1).